The primary structure comprises 461 residues: Cysteine--tRNA ligase (461 aa).

Cys30 is a binding site for Zn(2+). Residues 32 to 42 carry the 'HIGH' region motif; sequence PTVYSYAHIGN. The Zn(2+) site is built by Cys212, His237, and Glu241. Positions 270 to 274 match the 'KMSKS' region motif; the sequence is KMSKS. Lys273 provides a ligand contact to ATP.

Belongs to the class-I aminoacyl-tRNA synthetase family. In terms of assembly, monomer. Zn(2+) is required as a cofactor.

The protein resides in the cytoplasm. The enzyme catalyses tRNA(Cys) + L-cysteine + ATP = L-cysteinyl-tRNA(Cys) + AMP + diphosphate. This Maricaulis maris (strain MCS10) (Caulobacter maris) protein is Cysteine--tRNA ligase.